The sequence spans 327 residues: Clavesin-2 (327 aa).

The CRAL-TRIO domain occupies isoleucine 96–aspartate 257. A disordered region spans residues valine 288–aspartate 327. Serine 325 is subject to Phosphoserine.

Forms a complex with clathrin heavy chain and gamma-adaptin. Expressed in brain with no expression detected in non-neuronal tissues (at protein level).

It localises to the golgi apparatus. It is found in the trans-Golgi network membrane. The protein localises to the early endosome membrane. The protein resides in the cytoplasmic vesicle. Its subcellular location is the clathrin-coated vesicle. In terms of biological role, required for normal morphology of late endosomes and/or lysosomes in neurons. Binds phosphatidylinositol 3,5-bisphosphate (PtdIns(3,5)P2). In Rattus norvegicus (Rat), this protein is Clavesin-2.